We begin with the raw amino-acid sequence, 995 residues long: Pheromone-regulated membrane protein 10 (995 aa).

Disordered stretches follow at residues 1–217 (MSSH…GEKH), 253–299 (GRVL…AVEM), 326–407 (DQSF…YIAP), and 425–508 (NPQD…NPDQ). The span at 74–88 (SNSSTTNNSTESSGS) shows a compositional bias: low complexity. Positions 110–121 (VKGESGDAHEGS) are enriched in basic and acidic residues. Positions 157 to 166 (SRGSVGSSSS) are enriched in low complexity. Positions 170-187 (KGSDDVNEKETNLDHDYD) are enriched in basic and acidic residues. The span at 259–269 (GSGGGGGGGLI) shows a compositional bias: gly residues. The span at 283-296 (EEKEVGGGGEDDGA) shows a compositional bias: acidic residues. Residues 326–347 (DQSFTYDEPNQSAGSSRNSTAP) are compositionally biased toward polar residues. Basic and acidic residues-rich tracts occupy residues 359–371 (DDHK…DQGK) and 385–396 (GNDDPEDQHLLL). Over residues 495–506 (EADDEDEDEENP) the composition is skewed to acidic residues. 10 helical membrane-spanning segments follow: residues 678 to 698 (VFLY…GGWL), 700 to 720 (IPVT…VSSM), 726 to 746 (SVFE…IGSI), 752 to 772 (FCFS…YIIL), 794 to 814 (IIYS…FGWV), 833 to 850 (KYRI…GLIN), 858 to 878 (PVMM…GKHF), 881 to 901 (VPEF…NVYS), 906 to 926 (GMAV…GIAS), and 965 to 985 (VEVS…VYPF).

It belongs to the ThrE exporter (TC 2.A.79) family.

The protein localises to the membrane. The polypeptide is Pheromone-regulated membrane protein 10 (Pichia sorbitophila (strain ATCC MYA-4447 / BCRC 22081 / CBS 7064 / NBRC 10061 / NRRL Y-12695) (Hybrid yeast)).